Reading from the N-terminus, the 209-residue chain is Ubiquitin-conjugating enzyme E2 S (209 aa).

Positions 14–160 (QTIRQVMREL…ARMMTEIHAQ (147 aa)) constitute a UBC core domain. Cys-98 serves as the catalytic Glycyl thioester intermediate. Positions 168–194 (AVGDAKDDGGPSTKKHAGLDKKLQDKK) are disordered. Basic and acidic residues predominate over residues 184 to 194 (AGLDKKLQDKK).

The protein belongs to the ubiquitin-conjugating enzyme family.

The catalysed reaction is S-ubiquitinyl-[E1 ubiquitin-activating enzyme]-L-cysteine + [E2 ubiquitin-conjugating enzyme]-L-cysteine = [E1 ubiquitin-activating enzyme]-L-cysteine + S-ubiquitinyl-[E2 ubiquitin-conjugating enzyme]-L-cysteine.. Its pathway is protein modification; protein ubiquitination. Its function is as follows. Catalyzes the covalent attachment of ubiquitin to other proteins. Acts as an essential factor of the anaphase promoting complex/cyclosome (APC/C), a cell cycle-regulated ubiquitin ligase that controls progression through mitosis. Acts by specifically elongating polyubiquitin chains initiated by the E2 enzyme vih/UbcH10 on APC/C substrates, enhancing the degradation of APC/C substrates by the proteasome and promoting mitotic exit. The chain is Ubiquitin-conjugating enzyme E2 S from Drosophila melanogaster (Fruit fly).